Here is a 128-residue protein sequence, read N- to C-terminus: Probable 4-amino-4-deoxy-L-arabinose-phosphoundecaprenol flippase subunit ArnF (128 aa).

Residues 1-2 lie on the Cytoplasmic side of the membrane; that stretch reads MG. Residues 3–23 traverse the membrane as a helical segment; the sequence is LMWGLFSVIIASAAQLSLGFA. Over 24–35 the chain is Periplasmic; that stretch reads ASHLPPMTHLWD. Residues 36–56 traverse the membrane as a helical segment; it reads FIAALLAFGLDARILLLGLLG. Topologically, residues 57 to 76 are cytoplasmic; sequence YLLSVFCWYKTLHKLALSKA. The chain crosses the membrane as a helical span at residues 77 to 97; the sequence is YALLSMSYVLVWIASMILPGW. Topologically, residues 98–100 are periplasmic; sequence EGT. The chain crosses the membrane as a helical span at residues 101-121; sequence FSLKALLGVACIMSGLMLIFL. The Cytoplasmic portion of the chain corresponds to 122 to 128; sequence PTTKQRY.

It belongs to the ArnF family. In terms of assembly, heterodimer of ArnE and ArnF.

The protein resides in the cell inner membrane. The protein operates within bacterial outer membrane biogenesis; lipopolysaccharide biosynthesis. Its function is as follows. Translocates 4-amino-4-deoxy-L-arabinose-phosphoundecaprenol (alpha-L-Ara4N-phosphoundecaprenol) from the cytoplasmic to the periplasmic side of the inner membrane. The sequence is that of Probable 4-amino-4-deoxy-L-arabinose-phosphoundecaprenol flippase subunit ArnF from Escherichia coli O17:K52:H18 (strain UMN026 / ExPEC).